Here is a 1441-residue protein sequence, read N- to C-terminus: Envelopment polyprotein (1441 aa).

Residues 1–13 form the signal peptide; it reads MICILVLITVAAA. Topologically, residues 14–200 are lumenal; the sequence is SPVYQRCFQD…GSIANSICQN (187 aa). Asparagine 57 carries N-linked (GlcNAc...) asparagine; by host glycosylation. The hydrophobic stretch at 201–221 threads the membrane; that stretch reads IEIIILVTLTLLIFILLSILS. Over 222 to 305 the chain is Cytoplasmic; that stretch reads KTYICYLLMP…RAARVMCKSK (84 aa). At 306–326 the chain is embedded in the membrane; sequence GPASILSIITAVLVLTFVTPI. Residues 327-361 lie on the Lumenal side of the membrane; sequence NSMVLGESKETFELEDLPDDMLEMASRINSYYLTC. A membrane pass occupies residues 362–382; that stretch reads ILNYAVSWGLVIIGLLIGLLF. At 383–450 the chain is on the cytoplasmic side; that stretch reads KKYQHRFLNV…NCLVQYKAKW (68 aa). A transmembrane span lies at residues 451–471; sequence MMNFLIIYIFLILIKDSAIVV. Residues 472-1395 are Lumenal-facing; sequence QAAGTDFTTC…EPFKNLFGSY (924 aa). N-linked (GlcNAc...) asparagine; by host glycosylation is present at asparagine 490. The tract at residues 1066–1087 is fusion peptide; the sequence is WGCEEFGCLAVSDGCVFGSCQD. N-linked (GlcNAc...) asparagine; by host glycosylation occurs at asparagine 1177. Over 1396 to 1416 the chain traverses the membrane; sequence IGIFYTFIISIVVLLVIIYVL. The Cytoplasmic portion of the chain corresponds to 1417 to 1433; it reads LPICFKLRDTLRKHEDA.

The protein belongs to the orthobunyaviruses M polyprotein family. As to quaternary structure, glycoprotein C and Glycoprotein N interact with each other.

The protein localises to the virion membrane. The protein resides in the host Golgi apparatus membrane. It is found in the host endoplasmic reticulum membrane. Its function is as follows. Glycoprotein C and glycoprotein N interact with each other and are present at the surface of the virion. They are able to attach the virion to a cell receptor and to promote fusion of membranes after endocytosis of the virion. The chain is Envelopment polyprotein (GP) from Bunyavirus La Crosse (isolate Human/United States/L78/1978).